A 346-amino-acid polypeptide reads, in one-letter code: Phosphate acyltransferase (346 aa).

The protein belongs to the PlsX family. As to quaternary structure, homodimer. Probably interacts with PlsY.

It localises to the cytoplasm. The enzyme catalyses a fatty acyl-[ACP] + phosphate = an acyl phosphate + holo-[ACP]. It functions in the pathway lipid metabolism; phospholipid metabolism. Its function is as follows. Catalyzes the reversible formation of acyl-phosphate (acyl-PO(4)) from acyl-[acyl-carrier-protein] (acyl-ACP). This enzyme utilizes acyl-ACP as fatty acyl donor, but not acyl-CoA. The sequence is that of Phosphate acyltransferase from Delftia acidovorans (strain DSM 14801 / SPH-1).